The following is a 1428-amino-acid chain: DNA-directed RNA polymerase subunit beta' (1428 aa).

Positions 66, 68, 81, and 84 each coordinate Zn(2+). Mg(2+)-binding residues include aspartate 472, aspartate 474, and aspartate 476. Zn(2+) contacts are provided by cysteine 816, cysteine 890, cysteine 897, and cysteine 900.

The protein belongs to the RNA polymerase beta' chain family. As to quaternary structure, the RNAP catalytic core consists of 2 alpha, 1 beta, 1 beta' and 1 omega subunit. When a sigma factor is associated with the core the holoenzyme is formed, which can initiate transcription. Mg(2+) is required as a cofactor. The cofactor is Zn(2+).

It catalyses the reaction RNA(n) + a ribonucleoside 5'-triphosphate = RNA(n+1) + diphosphate. Functionally, DNA-dependent RNA polymerase catalyzes the transcription of DNA into RNA using the four ribonucleoside triphosphates as substrates. The polypeptide is DNA-directed RNA polymerase subunit beta' (Phocaeicola vulgatus (strain ATCC 8482 / DSM 1447 / JCM 5826 / CCUG 4940 / NBRC 14291 / NCTC 11154) (Bacteroides vulgatus)).